Reading from the N-terminus, the 475-residue chain is Tetratricopeptide repeat protein 29 (475 aa).

TPR repeat units lie at residues 92–131 (DALREAARVRSLFWLQKPLEEQPDKLDYLYHYLTRAEDAE), 136–173 (FEDVHNNLYALACYFNNSEDKWVRNHFYERCFKIAQLI), 182–215 (AEAHMHMGLLYEEDGQLLEAAEHYEAFHQLTQGR), 234–267 (LRTYRLLSDKMLENKEYKQAIKILIKASEIAKEG), 274–307 (AEASYYLGLAHLAAEEYETALTVLDTYCKISTDL), 314–347 (GRGYEAIAKVLQSQGEMTEAIKYLKKFVKIARNN), and 354–387 (VRASTMLGDIYNEKGYYNKASECFQQAFDTTVEL). Residues 437-475 (IEPDPVTEEFRGSTVEAVSQNSERLEELSRFPGDQKNET) are disordered. Over residues 459–475 (ERLEELSRFPGDQKNET) the composition is skewed to basic and acidic residues.

In terms of tissue distribution, expressed in spermatozoa (at protein level).

It is found in the cytoplasm. The protein resides in the cytoskeleton. Its subcellular location is the flagellum axoneme. In terms of biological role, axonemal protein which is implicated in axonemal and/or peri-axonemal structure assembly and regulates flagellum assembly and beating and therefore sperm motility. The sequence is that of Tetratricopeptide repeat protein 29 (TTC29) from Homo sapiens (Human).